The primary structure comprises 363 residues: S-methylmethionine--homocysteine S-methyltransferase BHMT2 (363 aa).

The Hcy-binding domain occupies 11 to 305; it reads KGILERLDSG…YHIRAIAEEL (295 aa). Residues cysteine 208, cysteine 290, and cysteine 291 each coordinate Zn(2+). Position 321 is a phosphoserine (serine 321).

As to quaternary structure, homotetramer. Zn(2+) serves as cofactor. As to expression, expressed in fetal heart, lung, liver, kidney and eye.

The enzyme catalyses S-methyl-L-methionine + L-homocysteine = 2 L-methionine + H(+). Its pathway is amino-acid biosynthesis; L-methionine biosynthesis via de novo pathway; L-methionine from L-homocysteine (BhmT route): step 1/1. Functionally, involved in the regulation of homocysteine metabolism. Converts homocysteine to methionine using S-methylmethionine (SMM) as a methyl donor. This is S-methylmethionine--homocysteine S-methyltransferase BHMT2 (Bhmt2) from Mus musculus (Mouse).